The chain runs to 311 residues: tRNA-cytidine(32) 2-sulfurtransferase (311 aa).

The short motif at 47–52 (SGGKDS) is the PP-loop motif element. Residues Cys-122, Cys-125, and Cys-213 each contribute to the [4Fe-4S] cluster site.

It belongs to the TtcA family. Homodimer. Mg(2+) serves as cofactor. The cofactor is [4Fe-4S] cluster.

The protein resides in the cytoplasm. The catalysed reaction is cytidine(32) in tRNA + S-sulfanyl-L-cysteinyl-[cysteine desulfurase] + AH2 + ATP = 2-thiocytidine(32) in tRNA + L-cysteinyl-[cysteine desulfurase] + A + AMP + diphosphate + H(+). It participates in tRNA modification. In terms of biological role, catalyzes the ATP-dependent 2-thiolation of cytidine in position 32 of tRNA, to form 2-thiocytidine (s(2)C32). The sulfur atoms are provided by the cysteine/cysteine desulfurase (IscS) system. This is tRNA-cytidine(32) 2-sulfurtransferase from Salmonella paratyphi B (strain ATCC BAA-1250 / SPB7).